The following is a 101-amino-acid chain: Integration host factor subunit beta (101 aa).

Belongs to the bacterial histone-like protein family. Heterodimer of an alpha and a beta chain.

Its function is as follows. This protein is one of the two subunits of integration host factor, a specific DNA-binding protein that functions in genetic recombination as well as in transcriptional and translational control. The polypeptide is Integration host factor subunit beta (Janthinobacterium sp. (strain Marseille) (Minibacterium massiliensis)).